Here is a 138-residue protein sequence, read N- to C-terminus: Acidic phospholipase A2 2 (138 aa).

Residues 1–16 (MRTLWIVAVWLTGVEG) form the signal peptide. Disulfide bonds link cysteine 42–cysteine 131, cysteine 44–cysteine 60, cysteine 59–cysteine 111, cysteine 65–cysteine 138, cysteine 66–cysteine 104, cysteine 73–cysteine 97, and cysteine 91–cysteine 102. Ca(2+)-binding residues include tyrosine 43, glycine 45, and glycine 47. The active site involves histidine 63. Aspartate 64 is a binding site for Ca(2+). The active site involves aspartate 105.

In terms of assembly, monomer. The cofactor is Ca(2+). As to expression, expressed by the venom gland.

It localises to the secreted. The enzyme catalyses a 1,2-diacyl-sn-glycero-3-phosphocholine + H2O = a 1-acyl-sn-glycero-3-phosphocholine + a fatty acid + H(+). Its function is as follows. Snake venom phospholipase that inhibits ADP- and collagen-induced human platelet aggregation. This inhibition is completely inhibited by abolition of catalytic activity in case of collagen as inducer and partially inhibited in case of ADP as inducer. PLA2 catalyzes the calcium-dependent hydrolysis of the 2-acyl groups in 3-sn-phosphoglycerides. The polypeptide is Acidic phospholipase A2 2 (Macrovipera lebetinus (Levantine viper)).